A 149-amino-acid chain; its full sequence is Large ribosomal subunit protein uL13 (149 aa).

Belongs to the universal ribosomal protein uL13 family. As to quaternary structure, part of the 50S ribosomal subunit.

In terms of biological role, this protein is one of the early assembly proteins of the 50S ribosomal subunit, although it is not seen to bind rRNA by itself. It is important during the early stages of 50S assembly. The sequence is that of Large ribosomal subunit protein uL13 from Chlorobium luteolum (strain DSM 273 / BCRC 81028 / 2530) (Pelodictyon luteolum).